A 158-amino-acid polypeptide reads, in one-letter code: Cytochrome c-type biogenesis protein CcmE (158 aa).

Polar residues predominate over residues 1–11 (MTRPDSGSSPA). The interval 1–20 (MTRPDSGSSPAPLSEARRRK) is disordered. The Cytoplasmic segment spans residues 1–23 (MTRPDSGSSPAPLSEARRRKRNP). A helical; Signal-anchor for type II membrane protein transmembrane segment spans residues 24-44 (LPTVLGITALLGLAGFIAFGN). Residues 45-158 (LNKSLEYFVT…ELRDLLEQSE (114 aa)) are Extracellular-facing. Residues H137 and Y141 each contribute to the heme site.

The protein belongs to the CcmE/CycJ family.

It is found in the cell membrane. Functionally, heme chaperone required for the biogenesis of c-type cytochromes. Transiently binds heme delivered by CcmC and transfers the heme to apo-cytochromes in a process facilitated by CcmF and CcmH. The protein is Cytochrome c-type biogenesis protein CcmE of Deinococcus deserti (strain DSM 17065 / CIP 109153 / LMG 22923 / VCD115).